The following is a 665-amino-acid chain: UvrABC system protein B (665 aa).

In terms of domain architecture, Helicase ATP-binding spans 25 to 178; it reads ASLQAEHRFQ…RQLLRDLTTI (154 aa). 38-45 is a binding site for ATP; it reads GATGTGKT. Positions 91–114 match the Beta-hairpin motif; that stretch reads YYDYYQPEAYIPVTDTYIEKTAAI. The 167-residue stretch at 429–595 folds into the Helicase C-terminal domain; it reads QVDDLLGEVR…PIVKKASNAI (167 aa). A UVR domain is found at 626-661; it reads PELITQLEAQMKEAAKKLEFEEAAKYRDRIKQLRDK.

Belongs to the UvrB family. As to quaternary structure, forms a heterotetramer with UvrA during the search for lesions. Interacts with UvrC in an incision complex.

Its subcellular location is the cytoplasm. Its function is as follows. The UvrABC repair system catalyzes the recognition and processing of DNA lesions. A damage recognition complex composed of 2 UvrA and 2 UvrB subunits scans DNA for abnormalities. Upon binding of the UvrA(2)B(2) complex to a putative damaged site, the DNA wraps around one UvrB monomer. DNA wrap is dependent on ATP binding by UvrB and probably causes local melting of the DNA helix, facilitating insertion of UvrB beta-hairpin between the DNA strands. Then UvrB probes one DNA strand for the presence of a lesion. If a lesion is found the UvrA subunits dissociate and the UvrB-DNA preincision complex is formed. This complex is subsequently bound by UvrC and the second UvrB is released. If no lesion is found, the DNA wraps around the other UvrB subunit that will check the other stand for damage. This chain is UvrABC system protein B, found in Cyanothece sp. (strain PCC 7425 / ATCC 29141).